The sequence spans 252 residues: Probable oligoribonuclease (252 aa).

One can recognise an Exonuclease domain in the interval 81-241 (VWIDCEMTGL…ALSDILESIG (161 aa)). Tyrosine 202 is a catalytic residue.

Belongs to the oligoribonuclease family.

The protein localises to the cytoplasm. The protein resides in the nucleus. Its function is as follows. 3'-to-5' exoribonuclease specific for small oligoribonucleotides. The sequence is that of Probable oligoribonuclease (rex2) from Schizosaccharomyces pombe (strain 972 / ATCC 24843) (Fission yeast).